The following is a 247-amino-acid chain: C-type lectin domain family 7 member A (247 aa).

Residues 1 to 44 lie on the Cytoplasmic side of the membrane; sequence MEYQSSVENLDEDGYTQLDFSSRNITRRSVVSEKGLCAASSHWR. The short motif at 15 to 18 is the ITAM-like element; sequence YTQL. The chain crosses the membrane as a helical; Signal-anchor for type II membrane protein span at residues 45 to 65; it reads LIAVTLGILCSVMLVITVVLS. Residues 66–247 are Extracellular-facing; it reads TSGIWRSSSG…YSICEKKLSV (182 aa). A compositionally biased stretch (polar residues) spans 81–101; it reads SDSFPSRNKDNQSQPTQSSLE. The tract at residues 81–103 is disordered; that stretch reads SDSFPSRNKDNQSQPTQSSLEDS. Residue Asn91 is glycosylated (N-linked (GlcNAc...) asparagine). 3 cysteine pairs are disulfide-bonded: Cys120–Cys131, Cys148–Cys241, and Cys220–Cys233. The C-type lectin domain maps to 127-242; it reads HEDSCYLFST…CSVHSYSICE (116 aa). 146-153 contributes to the (1,3-beta-D-glucosyl)n binding site; that stretch reads RQCFQLGS. Residues Lys157, Asp159, and Glu163 each coordinate a divalent metal cation. Glu195 is a binding site for (1,3-beta-D-glucosyl)n. Glu242 serves as a coordination point for a divalent metal cation.

Homodimer. Interacts with SYK; participates in leukocyte activation in presence of fungal pathogens. Interacts with CD37; this interaction controls CLEC7A-mediated IL-6 production. Phosphorylated on tyrosine residues in response to beta-glucan binding. In terms of tissue distribution, detected in bone marrow, monocytes, macrophages, dendritic cells and natural killer cells.

It localises to the cell membrane. Functionally, lectin that functions as a pattern recognizing receptor (PRR) specific for beta-1,3-linked and beta-1,6-linked glucans, which constitute cell wall constituents from pathogenic bacteria and fungi. Necessary for the TLR2-mediated inflammatory response and activation of NF-kappa-B: upon beta-glucan binding, recruits SYK via its ITAM motif and promotes a signaling cascade that activates some CARD domain-BCL10-MALT1 (CBM) signalosomes, leading to the activation of NF-kappa-B and MAP kinase p38 (MAPK11, MAPK12, MAPK13 and/or MAPK14) pathways which stimulate expression of genes encoding pro-inflammatory cytokines and chemokines. Enhances cytokine production in macrophages and dendritic cells. Mediates production of reactive oxygen species in the cell. Mediates phagocytosis of C.albicans conidia. Binds T-cells in a way that does not involve their surface glycans and plays a role in T-cell activation. Stimulates T-cell proliferation. Induces phosphorylation of SCIMP after binding beta-glucans. The sequence is that of C-type lectin domain family 7 member A (CLEC7A) from Bos taurus (Bovine).